A 200-amino-acid chain; its full sequence is ATP-dependent Clp protease proteolytic subunit 3 (200 aa).

Catalysis depends on S101, which acts as the Nucleophile. H126 is an active-site residue.

It belongs to the peptidase S14 family. In terms of assembly, fourteen ClpP subunits assemble into 2 heptameric rings which stack back to back to give a disk-like structure with a central cavity, resembling the structure of eukaryotic proteasomes.

The protein resides in the cytoplasm. The catalysed reaction is Hydrolysis of proteins to small peptides in the presence of ATP and magnesium. alpha-casein is the usual test substrate. In the absence of ATP, only oligopeptides shorter than five residues are hydrolyzed (such as succinyl-Leu-Tyr-|-NHMec, and Leu-Tyr-Leu-|-Tyr-Trp, in which cleavage of the -Tyr-|-Leu- and -Tyr-|-Trp bonds also occurs).. Its function is as follows. Cleaves peptides in various proteins in a process that requires ATP hydrolysis. Has a chymotrypsin-like activity. Plays a major role in the degradation of misfolded proteins. This chain is ATP-dependent Clp protease proteolytic subunit 3, found in Synechococcus sp. (strain CC9902).